The primary structure comprises 352 residues: CMP-sialic acid transporter 4 (352 aa).

Topologically, residues 1–51 (MEYRKIKDEDDHDVASDIESVKGKSHTVASSNIAMATLGVGSSERINWKRK) are cytoplasmic. The helical transmembrane segment at 52–72 (GVVTCALTILTSSQAILIVWS) threads the bilayer. The Lumenal portion of the chain corresponds to 73-81 (KRAGKYEYS). The helical transmembrane segment at 82-102 (VTTANFLVGTLKCALSLLALT) threads the bilayer. Residues 103–124 (RIWKNEGVTDDNRLSTTFDEVK) lie on the Cytoplasmic side of the membrane. A helical transmembrane segment spans residues 125–145 (VFPIPAALYLFKNLLQYYIFA). Topologically, residues 146 to 174 (YVDAPGYQILKNLNIISTGVLYRIILKRK) are lumenal. Residues 175 to 195 (LSEIQWAGFILLCCGCTTAQL) form a helical membrane-spanning segment. The Cytoplasmic portion of the chain corresponds to 196–210 (NSNSDRVLQTSLPGW). A helical membrane pass occupies residues 211–231 (TMAIVMALLSGFAGVYTEAII). Residues 232–238 (KKRPSRN) lie on the Lumenal side of the membrane. The chain crosses the membrane as a helical span at residues 239–259 (INVQNFWLYVFGMAFNAVAIV). Residues 260-276 (IQDFDAVANKGFFHGYS) are Cytoplasmic-facing. The helical transmembrane segment at 277–297 (FITLLMILNHALSGIAVSMVM) threads the bilayer. At 298 to 313 (KYADNIVKVYSTSVAM) the chain is on the lumenal side. A helical membrane pass occupies residues 314 to 334 (LLTAVVSVFLFNFHLSLAFFL). The Cytoplasmic segment spans residues 335 to 352 (GSTVVSVSVYLHSAGKLR).

This sequence belongs to the nucleotide-sugar transporter family. CMP-Sialate:CMP antiporter (TC 2.A.7.12) subfamily.

It localises to the golgi apparatus membrane. Its function is as follows. Sugar transporter involved in the transport of CMP-sialic acid from the cytoplasm into the Golgi. Essential protein. This is CMP-sialic acid transporter 4 from Arabidopsis thaliana (Mouse-ear cress).